A 206-amino-acid chain; its full sequence is Urease accessory protein UreG (206 aa).

Residue 15–22 (GPVGSGKT) participates in GTP binding.

Belongs to the SIMIBI class G3E GTPase family. UreG subfamily. Homodimer. UreD, UreF and UreG form a complex that acts as a GTP-hydrolysis-dependent molecular chaperone, activating the urease apoprotein by helping to assemble the nickel containing metallocenter of UreC. The UreE protein probably delivers the nickel.

It localises to the cytoplasm. Facilitates the functional incorporation of the urease nickel metallocenter. This process requires GTP hydrolysis, probably effectuated by UreG. This is Urease accessory protein UreG from Ralstonia pickettii (strain 12J).